The primary structure comprises 603 residues: NADH-ubiquinone oxidoreductase chain 5 (603 aa).

The next 16 membrane-spanning stretches (helical) occupy residues 4-24 (FTTM…ATLI), 38-58 (TAIA…ICLG), 89-109 (FLPV…WYMA), 122-142 (LIFL…QLFI), 171-191 (AILY…WFLL), 211-233 (LPLL…HPWL), 241-261 (TPVS…FLLI), 273-293 (IQTL…ICAL), 301-320 (IVAF…IGIN), 325-347 (ALLH…GSII), 366-386 (MPLT…MPFL), 405-424 (NTWA…AYST), 457-477 (LMLG…PMSL), 488-508 (LAAL…NYLA), 524-544 (IMLG…SLLM), and 582-602 (GLIK…LLMI).

It belongs to the complex I subunit 5 family. Core subunit of respiratory chain NADH dehydrogenase (Complex I) which is composed of 45 different subunits.

It is found in the mitochondrion inner membrane. It carries out the reaction a ubiquinone + NADH + 5 H(+)(in) = a ubiquinol + NAD(+) + 4 H(+)(out). Core subunit of the mitochondrial membrane respiratory chain NADH dehydrogenase (Complex I) which catalyzes electron transfer from NADH through the respiratory chain, using ubiquinone as an electron acceptor. Essential for the catalytic activity and assembly of complex I. This is NADH-ubiquinone oxidoreductase chain 5 (MT-ND5) from Pongo abelii (Sumatran orangutan).